Consider the following 144-residue polypeptide: Large ribosomal subunit protein uL16 (144 aa).

A compositionally biased stretch (basic residues) spans 1–16 (MLVPKRVKHRKVQRGK). A disordered region spans residues 1-20 (MLVPKRVKHRKVQRGKMRGE).

Belongs to the universal ribosomal protein uL16 family. Part of the 50S ribosomal subunit.

Binds 23S rRNA and is also seen to make contacts with the A and possibly P site tRNAs. This is Large ribosomal subunit protein uL16 from Limosilactobacillus fermentum (strain NBRC 3956 / LMG 18251) (Lactobacillus fermentum).